A 352-amino-acid chain; its full sequence is GTPase Obg (352 aa).

Positions 1–159 (MSFIDEAKVF…FPIFMQLKVL (159 aa)) constitute an Obg domain. Residues 160-327 (SDIGIIGMPN…VMLYEMLQKD (168 aa)) enclose the OBG-type G domain. Residues 166–173 (GMPNAGKS), 191–195 (FTTLE), 212–215 (DIPG), 279–282 (NKCD), and 308–310 (SLD) each bind GTP. Positions 173 and 193 each coordinate Mg(2+).

This sequence belongs to the TRAFAC class OBG-HflX-like GTPase superfamily. OBG GTPase family. In terms of assembly, monomer. Requires Mg(2+) as cofactor.

It is found in the cytoplasm. In terms of biological role, an essential GTPase which binds GTP, GDP and possibly (p)ppGpp with moderate affinity, with high nucleotide exchange rates and a fairly low GTP hydrolysis rate. Plays a role in control of the cell cycle, stress response, ribosome biogenesis and in those bacteria that undergo differentiation, in morphogenesis control. In Anaplasma phagocytophilum (strain HZ), this protein is GTPase Obg.